Consider the following 376-residue polypeptide: Chaperone protein DnaJ (376 aa).

The 66-residue stretch at 5–70 folds into the J domain; it reads DYYEILGVSK…QKRAAYDQYG (66 aa). The CR-type zinc-finger motif lies at 131–209; sequence GVTKEIRIPT…CHGHGRVERS (79 aa). Residues cysteine 144, cysteine 147, cysteine 161, cysteine 164, cysteine 183, cysteine 186, cysteine 197, and cysteine 200 each coordinate Zn(2+). CXXCXGXG motif repeat units follow at residues 144–151, 161–168, 183–190, and 197–204; these read CDVCHGSG, CPTCHGSG, CPHCQGRG, and CNKCHGHG.

The protein belongs to the DnaJ family. As to quaternary structure, homodimer. The cofactor is Zn(2+).

Its subcellular location is the cytoplasm. In terms of biological role, participates actively in the response to hyperosmotic and heat shock by preventing the aggregation of stress-denatured proteins and by disaggregating proteins, also in an autonomous, DnaK-independent fashion. Unfolded proteins bind initially to DnaJ; upon interaction with the DnaJ-bound protein, DnaK hydrolyzes its bound ATP, resulting in the formation of a stable complex. GrpE releases ADP from DnaK; ATP binding to DnaK triggers the release of the substrate protein, thus completing the reaction cycle. Several rounds of ATP-dependent interactions between DnaJ, DnaK and GrpE are required for fully efficient folding. Also involved, together with DnaK and GrpE, in the DNA replication of plasmids through activation of initiation proteins. The polypeptide is Chaperone protein DnaJ (Shigella flexneri serotype 5b (strain 8401)).